An 85-amino-acid polypeptide reads, in one-letter code: Cell division topological specificity factor (85 aa).

This sequence belongs to the MinE family.

In terms of biological role, prevents the cell division inhibition by proteins MinC and MinD at internal division sites while permitting inhibition at polar sites. This ensures cell division at the proper site by restricting the formation of a division septum at the midpoint of the long axis of the cell. This Shewanella baltica (strain OS223) protein is Cell division topological specificity factor.